The chain runs to 494 residues: Guanosine-5'-triphosphate,3'-diphosphate pyrophosphatase (494 aa).

The protein belongs to the GppA/Ppx family. GppA subfamily.

It catalyses the reaction guanosine 3'-diphosphate 5'-triphosphate + H2O = guanosine 3',5'-bis(diphosphate) + phosphate + H(+). Its pathway is purine metabolism; ppGpp biosynthesis; ppGpp from GTP: step 2/2. Catalyzes the conversion of pppGpp to ppGpp. Guanosine pentaphosphate (pppGpp) is a cytoplasmic signaling molecule which together with ppGpp controls the 'stringent response', an adaptive process that allows bacteria to respond to amino acid starvation, resulting in the coordinated regulation of numerous cellular activities. This Cronobacter sakazakii (strain ATCC BAA-894) (Enterobacter sakazakii) protein is Guanosine-5'-triphosphate,3'-diphosphate pyrophosphatase.